Here is a 144-residue protein sequence, read N- to C-terminus: UPF0225 protein RSc0270 (144 aa).

Belongs to the UPF0225 family.

This chain is UPF0225 protein RSc0270, found in Ralstonia nicotianae (strain ATCC BAA-1114 / GMI1000) (Ralstonia solanacearum).